A 136-amino-acid polypeptide reads, in one-letter code: Large ribosomal subunit protein uL16 (136 aa).

This sequence belongs to the universal ribosomal protein uL16 family. In terms of assembly, part of the 50S ribosomal subunit.

Binds 23S rRNA and is also seen to make contacts with the A and possibly P site tRNAs. In Haemophilus ducreyi (strain 35000HP / ATCC 700724), this protein is Large ribosomal subunit protein uL16.